Reading from the N-terminus, the 147-residue chain is Deoxyuridine 5'-triphosphate nucleotidohydrolase (147 aa).

R24 contributes to the Mg(2+) binding site. Residues P68–S70, G82–D85, Y88, G93, I95, and R111 each bind dUTP.

Belongs to the dUTPase family. Requires Mg(2+) as cofactor.

The catalysed reaction is dUTP + H2O = dUMP + diphosphate + H(+). Its function is as follows. This enzyme is involved in nucleotide metabolism: it produces dUMP, the immediate precursor of thymidine nucleotides and it decreases the intracellular concentration of dUTP so that uracil cannot be incorporated into DNA. This is Deoxyuridine 5'-triphosphate nucleotidohydrolase (OPG046) from Camelus.